The chain runs to 192 residues: MLKKTLLSLTAVSMLASAGSALAAEYKFDKEGQHAFIEFRIKHLGYSWLYGSFNDFDGTFAFDEKNPSADKVNVTINTNSVDTNHAERDKHLRSAEFLNVSKHPQATFTSTEVKKDGDDYDITGNLTLNGVTKPVKLDAKLIGQGDDPWGNYRAGFQAEGTIKLKDFNITTDLGPASQDVELIIAVEGVRQK.

Positions Met1–Ala23 are cleaved as a signal peptide.

This sequence belongs to the UPF0312 family. Type 1 subfamily.

Its subcellular location is the periplasm. The chain is UPF0312 protein ECA1782 from Pectobacterium atrosepticum (strain SCRI 1043 / ATCC BAA-672) (Erwinia carotovora subsp. atroseptica).